Consider the following 337-residue polypeptide: Probable uridine nucleosidase 2 (337 aa).

Residue His-260 is part of the active site.

It belongs to the IUNH family.

The protein localises to the cytoplasm. It catalyses the reaction uridine + H2O = D-ribose + uracil. In terms of biological role, involved in pyrimidine breakdown. The polypeptide is Probable uridine nucleosidase 2 (URH2) (Oryza sativa subsp. japonica (Rice)).